Here is a 303-residue protein sequence, read N- to C-terminus: MATKAAFARMNGLGNQIIVADMRGRADSITSAAAIRLASDSETAFDQIMAIHDPRTPGTDYYIAIINCDGTQAQACGNGTRCVVQALAAETGRHAFTFETRAGILTATEHDDGLISVDMGTPRFDWQDIPLAQAVADTRKIELQVGPADAPVLHSPSIASMGNPHAVFWVDKDVWSYELDKFGPLLENHPIFPERANISIAHVTSSDTIDLRTWERGAGLTRACGSAACAAAVSAARTGRTGRKVTVNVPGGPLLIEWRDDDHVMMTGPAEWEFSGTFDPATGEWSRDTQGLQGSGNADRGAA.

Substrate-binding residues include N15, Q47, and N67. C76 functions as the Proton donor in the catalytic mechanism. Residues 77-78 (GN), N163, N197, and 215-216 (ER) each bind substrate. The Proton acceptor role is filled by C224. 225-226 (GS) contributes to the substrate binding site. The segment at 278–303 (FDPATGEWSRDTQGLQGSGNADRGAA) is disordered.

Belongs to the diaminopimelate epimerase family. As to quaternary structure, homodimer.

Its subcellular location is the cytoplasm. The catalysed reaction is (2S,6S)-2,6-diaminopimelate = meso-2,6-diaminopimelate. It functions in the pathway amino-acid biosynthesis; L-lysine biosynthesis via DAP pathway; DL-2,6-diaminopimelate from LL-2,6-diaminopimelate: step 1/1. Functionally, catalyzes the stereoinversion of LL-2,6-diaminopimelate (L,L-DAP) to meso-diaminopimelate (meso-DAP), a precursor of L-lysine and an essential component of the bacterial peptidoglycan. In Brucella abortus (strain S19), this protein is Diaminopimelate epimerase.